A 69-amino-acid chain; its full sequence is MDKFRWHPEFDFSKVRIRYIDRPKGYSEVSGDDIKEIGHMFIYLYSGAAIPHHRIVEIRYGEEVVWRRP.

It belongs to the UPF0248 family.

In Archaeoglobus fulgidus (strain ATCC 49558 / DSM 4304 / JCM 9628 / NBRC 100126 / VC-16), this protein is UPF0248 protein AF_0420.